The sequence spans 316 residues: Ribosomal RNA small subunit methyltransferase H (316 aa).

S-adenosyl-L-methionine-binding positions include 35–37, aspartate 55, phenylalanine 84, aspartate 105, and glutamine 112; that span reads AGH.

The protein belongs to the methyltransferase superfamily. RsmH family.

The protein localises to the cytoplasm. The catalysed reaction is cytidine(1402) in 16S rRNA + S-adenosyl-L-methionine = N(4)-methylcytidine(1402) in 16S rRNA + S-adenosyl-L-homocysteine + H(+). Its function is as follows. Specifically methylates the N4 position of cytidine in position 1402 (C1402) of 16S rRNA. The polypeptide is Ribosomal RNA small subunit methyltransferase H (Streptococcus sanguinis (strain SK36)).